The chain runs to 526 residues: Sugar transport protein 13 (526 aa).

Residues 1-18 (MTGGGFATSANGVEFEAK) are Cytoplasmic-facing. The helical transmembrane segment at 19 to 39 (ITPIVIISCIMAATGGLMFGY) threads the bilayer. Topologically, residues 40 to 81 (DVGVSGGVTSMPDFLEKFFPVVYRKVVAGADKDSNYCKYDNQ) are extracellular. The chain crosses the membrane as a helical span at residues 82–102 (GLQLFTSSLYLAGLTATFFAS). Residues 103-111 (YTTRTLGRR) are Cytoplasmic-facing. A helical membrane pass occupies residues 112–132 (LTMLIAGVFFIIGVALNAGAQ). The Extracellular segment spans residues 133–141 (DLAMLIAGR). The chain crosses the membrane as a helical span at residues 142-162 (ILLGCGVGFANQAVPLFLSEI). The Cytoplasmic segment spans residues 163-168 (APTRIR). The helical transmembrane segment at 169–189 (GGLNILFQLNVTIGILFANLV) threads the bilayer. Residues 190-203 (NYGTAKIKGGWGWR) lie on the Extracellular side of the membrane. A helical membrane pass occupies residues 204–224 (LSLGLAGIPALLLTVGALLVT). The Cytoplasmic portion of the chain corresponds to 225–296 (ETPNSLVERG…IAVALQIFQQ (72 aa)). A helical transmembrane segment spans residues 297–317 (CTGINAIMFYAPVLFSTLGFG). Topologically, residues 318-319 (SD) are extracellular. A helical membrane pass occupies residues 320–340 (ASLYSAVVTGAVNVLSTLVSI). Topologically, residues 341-349 (YSVDKVGRR) are cytoplasmic. The helical transmembrane segment at 350–370 (VLLLEAGVQMFFSQVVIAIIL) threads the bilayer. At 371–383 (GVKVTDTSTNLSK) the chain is on the extracellular side. A helical membrane pass occupies residues 384–404 (GFAILVVVMICTYVAAFAWSW). Topologically, residues 405–426 (GPLGWLIPSETFPLETRSAGQS) are cytoplasmic. The helical transmembrane segment at 427–447 (VTVCVNLLFTFIIAQAFLSML) threads the bilayer. Topologically, residues 448–451 (CHFK) are extracellular. Residues 452–472 (FGIFIFFSAWVLIMSVFVMFL) form a helical membrane-spanning segment. Over 473 to 526 (LPETKNIPIEEMTERVWKKHWFWARFMDDHNDHEFVNGEKSNGKSNGFDPSTRL) the chain is Cytoplasmic.

The protein belongs to the major facilitator superfamily. Sugar transporter (TC 2.A.1.1) family.

The protein resides in the cell membrane. Functionally, mediates an active uptake of hexoses, probably by sugar/hydrogen symport. In Arabidopsis thaliana (Mouse-ear cress), this protein is Sugar transport protein 13 (STP13).